A 150-amino-acid chain; its full sequence is Lipoprotein signal peptidase (150 aa).

Helical transmembrane passes span 5 to 25 (LSLVIIVVGIIADQVFKNWVV), 59 to 79 (QQWFFLVLTPIVLIVALWFLW), and 82 to 102 (MGQNWYFAGLTLIIAGALGNF). Catalysis depends on residues aspartate 113 and aspartate 129. The helical transmembrane segment at 124–144 (IFNIADILLSVGFVVLFIAIL) threads the bilayer.

The protein belongs to the peptidase A8 family.

The protein localises to the cell membrane. It catalyses the reaction Release of signal peptides from bacterial membrane prolipoproteins. Hydrolyzes -Xaa-Yaa-Zaa-|-(S,diacylglyceryl)Cys-, in which Xaa is hydrophobic (preferably Leu), and Yaa (Ala or Ser) and Zaa (Gly or Ala) have small, neutral side chains.. It functions in the pathway protein modification; lipoprotein biosynthesis (signal peptide cleavage). This protein specifically catalyzes the removal of signal peptides from prolipoproteins. This chain is Lipoprotein signal peptidase, found in Lactococcus lactis subsp. cremoris (strain SK11).